The sequence spans 117 residues: G antigen 1 (117 aa).

The disordered stretch occupies residues methionine 1–cysteine 117. 2 stretches are compositionally biased toward acidic residues: residues phenylalanine 32–glutamate 45 and glutamate 87–glutamate 96.

The protein belongs to the GAGE family. In terms of tissue distribution, expressed in a variety of tumor tissues but not in normal tissues, except testis.

Antigen, recognized on melanoma by autologous cytolytic T-lymphocytes. This chain is G antigen 1, found in Homo sapiens (Human).